The primary structure comprises 131 residues: UPF0146 protein PH0209 (131 aa).

Belongs to the UPF0146 family.

The polypeptide is UPF0146 protein PH0209 (Pyrococcus horikoshii (strain ATCC 700860 / DSM 12428 / JCM 9974 / NBRC 100139 / OT-3)).